Consider the following 154-residue polypeptide: Egg-lysin (154 aa).

The first 18 residues, 1-18 (MKLLVLWVFAMMATVAMS), serve as a signal peptide directing secretion.

As to quaternary structure, monomer. Homodimer. Molecules associate into dimers and then rapidly dissociate again. Interacts (as a monomer) with the egg vitelline layer protein VERL (via VERL repeats); each VERL chain can bind multiple copies of lysin. Sperm.

Its subcellular location is the cytoplasmic vesicle. It localises to the secretory vesicle. It is found in the acrosome lumen. In terms of biological role, creates a 3 um hole in the egg vitelline layer through which the sperm passes. Does not have enzyme activity. Species-specific interaction between the sperm protein lysin and the egg protein VERL exposes a basic surface on lysin that may dissociate the egg vitelline layer via electrostatic repulsion. Plays a role in ensuring species-specific fertilization. This Haliotis fulgens (Green abalone) protein is Egg-lysin.